The chain runs to 851 residues: Receptor like protein kinase S.2 (851 aa).

The Protein kinase 1 domain maps to 117-436 (FSDELILGSG…LPSFKSHPLY (320 aa)). ATP contacts are provided by residues 123–131 (LGSGGFGRV) and lysine 146. Catalysis depends on aspartate 248, which acts as the Proton acceptor. The disordered stretch occupies residues 448-471 (SATTTTTRTTMTTTTSTTSFNASS). The 288-residue stretch at 532-819 (FSDARRVAEV…SILDGSERFF (288 aa)) folds into the Protein kinase 2 domain. Residues 538-546 (VAEVDFGTA) and lysine 560 contribute to the ATP site.

The protein belongs to the protein kinase superfamily. Ser/Thr protein kinase family.

It carries out the reaction L-seryl-[protein] + ATP = O-phospho-L-seryl-[protein] + ADP + H(+). The enzyme catalyses L-threonyl-[protein] + ATP = O-phospho-L-threonyl-[protein] + ADP + H(+). The protein is Receptor like protein kinase S.2 (LECRKS2) of Arabidopsis thaliana (Mouse-ear cress).